The primary structure comprises 451 residues: UPF0210 protein lin0538 (451 aa).

Belongs to the UPF0210 family. Homodimer.

The polypeptide is UPF0210 protein lin0538 (Listeria innocua serovar 6a (strain ATCC BAA-680 / CLIP 11262)).